The sequence spans 446 residues: Hercynine oxygenase (446 aa).

Residue H51 participates in Fe cation binding. A gamma-L-glutamyl-L-cysteine-binding site is contributed by 87-90 (RASR). Fe cation is bound by residues H134 and H138. Gamma-L-glutamyl-L-cysteine contacts are provided by D416 and R420.

This sequence belongs to the EgtB family. In terms of assembly, monomer. Requires Fe(2+) as cofactor.

The enzyme catalyses gamma-L-glutamyl-L-cysteine + hercynine + O2 = gamma-L-glutamyl-hercynylcysteine S-oxide + H2O. The protein operates within amino-acid biosynthesis; ergothioneine biosynthesis. Catalyzes the oxidative sulfurization of hercynine (N-alpha,N-alpha,N-alpha-trimethyl-L-histidine) into hercynyl-gamma-L-glutamyl-L-cysteine sulfoxide, a step in the biosynthesis pathway of ergothioneine. The chain is Hercynine oxygenase from Mycolicibacterium thermoresistibile (strain ATCC 19527 / DSM 44167 / CIP 105390 / JCM 6362 / NCTC 10409 / 316) (Mycobacterium thermoresistibile).